A 700-amino-acid chain; its full sequence is Long-chain-fatty-acid--CoA ligase 1 (700 aa).

The disordered stretch occupies residues 1-21 (MVAQYTVPVGKAANEHETAPR). Lys-189 is covalently cross-linked (Glycyl lysine isopeptide (Lys-Gly) (interchain with G-Cter in ubiquitin)). Residue 269–280 (YTSGSTGEPKGV) participates in ATP binding. An FACS motif is present at residues 531-580 (DGWFKTGDIGEWEANGHLKIIDRKKNLVKTMNGEYIALEKLESVYRSNEY).

The protein belongs to the ATP-dependent AMP-binding enzyme family. In terms of assembly, interacts with FAT1. Requires Mg(2+) as cofactor.

Its subcellular location is the lipid droplet. It localises to the cell membrane. It catalyses the reaction a long-chain fatty acid + ATP + CoA = a long-chain fatty acyl-CoA + AMP + diphosphate. The enzyme catalyses (9Z)-octadecenoate + ATP + CoA = (9Z)-octadecenoyl-CoA + AMP + diphosphate. It carries out the reaction hexadecanoate + ATP + CoA = hexadecanoyl-CoA + AMP + diphosphate. The catalysed reaction is (9Z)-hexadecenoate + ATP + CoA = (9Z)-hexadecenoyl-CoA + AMP + diphosphate. It catalyses the reaction tetradecanoate + ATP + CoA = tetradecanoyl-CoA + AMP + diphosphate. The enzyme catalyses (9Z)-tetradecenoate + ATP + CoA = (9Z)-tetradecenoyl-CoA + AMP + diphosphate. It carries out the reaction (9Z,12Z)-octadecadienoate + ATP + CoA = (9Z,12Z)-octadecadienoyl-CoA + AMP + diphosphate. The catalysed reaction is dodecanoate + ATP + CoA = dodecanoyl-CoA + AMP + diphosphate. It catalyses the reaction pentadecanoate + ATP + CoA = pentadecanoyl-CoA + AMP + diphosphate. The enzyme catalyses undecanoate + ATP + CoA = undecanoyl-CoA + AMP + diphosphate. It carries out the reaction heptadecanoate + ATP + CoA = heptadecanoyl-CoA + AMP + diphosphate. The catalysed reaction is octadecanoate + ATP + CoA = octadecanoyl-CoA + AMP + diphosphate. Its function is as follows. Activates long-chain fatty acids (LCFA) by esterification of the fatty acids into metabolically active CoA-thioesters for subsequent degradation or incorporation into phospholipids. Also facilitates the transport of LCFAs into the cell, either by active transport or by decreasing the intracellular LCFA concentration. It may supplement intracellular myristoyl-CoA pools from exogenous myristate. Preferentially acts on C12:0-C16:0 fatty acids with myristic and pentadecanic acid (C15:0) having the highest activities. Also involved in long-chain base (LCB) uptake of sphingolipids. In contrast ot LCFA uptake, LCB uptake does not require ATP, suggesting that the enzyme is directly involved in active LCB uptake. Involved in the sphingolipid-to-glycerolipid metabolic pathway, converting the sphingolipid metabolite hexadecenoic acid to hexadecenoyl-CoA, which is then further converted to glycerolipids. In Saccharomyces cerevisiae (strain ATCC 204508 / S288c) (Baker's yeast), this protein is Long-chain-fatty-acid--CoA ligase 1 (FAA1).